The chain runs to 342 residues: UHRF1-like protein (342 aa).

Positions 41–149 are disordered; it reads SEATTLATPS…SHPGSEEEDI (109 aa). Polar residues predominate over residues 42 to 59; that stretch reads EATTLATPSNLKTAGNQR. Positions 74–90 are enriched in basic and acidic residues; it reads NRSDSPRKRPTKDREDL. Positions 115–141 are enriched in polar residues; that stretch reads TREQVTFNSDRDTPNTPSRQIKSTHSH. In terms of domain architecture, YDG spans 168–322; it reads GHIPGIGVGK…LMVCRYAFKR (155 aa). Asp-218 lines the DNA pocket. The segment at 236–257 is disordered; the sequence is KGTKQNPKNLRTAPQTSHQSFD. The segment covering 238-257 has biased composition (polar residues); it reads TKQNPKNLRTAPQTSHQSFD.

The protein localises to the nucleus. Its function is as follows. Involved in the maintenance of DNA methylation. Binds hemimethylated DNA. The polypeptide is UHRF1-like protein (Cryptococcus neoformans var. grubii serotype A (strain H99 / ATCC 208821 / CBS 10515 / FGSC 9487) (Filobasidiella neoformans var. grubii)).